The sequence spans 185 residues: Large ribosomal subunit protein uL15 (185 aa).

Residues 1–51 (MDLSSLRPAAGAVKNKKRVGRGQGSGNGTTAGKGNKGQQARSGYQKPINEG) are disordered. Over residues 21 to 35 (RGQGSGNGTTAGKGN) the composition is skewed to gly residues.

This sequence belongs to the universal ribosomal protein uL15 family. As to quaternary structure, part of the 50S ribosomal subunit.

Functionally, binds to the 23S rRNA. This is Large ribosomal subunit protein uL15 from Chlorobium phaeobacteroides (strain DSM 266 / SMG 266 / 2430).